A 410-amino-acid polypeptide reads, in one-letter code: Mating-type locus allele B7 protein (410 aa).

Positions 1 to 110 (MSSDPNFSLT…VNVGSPAVGC (110 aa)) are variable domain between B alleles. A DNA-binding region (homeobox; TALE-type) is located at residues 107–184 (AVGCRNLSED…NARRRSGWSH (78 aa)). The highly conserved between B alleles stretch occupies residues 111 to 410 (RNLSEDLPAY…PFLCLSVAFV (300 aa)). Disordered stretches follow at residues 202 to 225 (RAKLSSSTQSSPPSPMPEYPSNNL), 278 to 336 (TPKP…PELS), and 374 to 394 (ARGNRKVKALPKRAGKQQPDE). Positions 276-308 (KKTPKPGMPRPVTTVAKRQPARKTKPAAKPNSR) match the Nuclear localization signal motif. Residues 306–336 (NSRTANPRASTTPSIDSTLDSSKLESTPELS) are compositionally biased toward polar residues. Positions 333-410 (PELSMCSTAD…PFLCLSVAFV (78 aa)) are not essential for B7 function. Residues 375 to 388 (RGNRKVKALPKRAG) show a composition bias toward basic residues.

It belongs to the TALE/M-ATYP homeobox family.

The protein resides in the nucleus. In terms of biological role, the B locus has at least 25 alleles, and any combination of two different B alleles yields a multimeric regulatory protein, that activates genes responsible for the pathogenicity and for the sexual development of the fungus within the corn plant. The protein is Mating-type locus allele B7 protein of Mycosarcoma maydis (Corn smut fungus).